The sequence spans 432 residues: Asparagine--tRNA ligase (432 aa).

Belongs to the class-II aminoacyl-tRNA synthetase family. Homodimer.

It localises to the cytoplasm. It catalyses the reaction tRNA(Asn) + L-asparagine + ATP = L-asparaginyl-tRNA(Asn) + AMP + diphosphate + H(+). The chain is Asparagine--tRNA ligase from Lactobacillus gasseri (strain ATCC 33323 / DSM 20243 / BCRC 14619 / CIP 102991 / JCM 1131 / KCTC 3163 / NCIMB 11718 / NCTC 13722 / AM63).